A 675-amino-acid polypeptide reads, in one-letter code: E3 ubiquitin-protein ligase COP1 (675 aa).

The interval 1 to 40 is disordered; sequence MEEISTDPVVPAVKPDPRTSSVGEGANRHENDDGGSGGSE. 8 residues coordinate Zn(2+): Cys52, Cys55, Cys67, His69, Cys72, Cys75, Cys86, and Cys89. An RING-type zinc finger spans residues 52–90; that stretch reads CPICMQIIKDAFLTACGHSFCYMCIITHLRNKSDCPCCS. A CLS (cytoplasmic localization signal) region spans residues 67–177; it reads CGHSFCYMCI…LDFLHCLRKQ (111 aa). The segment at 120 to 177 is SNLS (subnuclear localization signal); it reads ASPLDQFREALQRGCDVSIKEVDNLLTLLAERKRKMEQEEAERNMQILLDFLHCLRKQ. Positions 134 to 201 form a coiled coil; it reads CDVSIKEVDN…IKEDINAVER (68 aa). The interval 261 to 290 is disordered; that stretch reads EGKAQGSSHGLPKKDALSGSDSQSLNQSTV. Residues 279-290 show a composition bias toward polar residues; the sequence is GSDSQSLNQSTV. The Bipartite nuclear localization signal signature appears at 294 to 317; sequence RKKRIHAQFNDLQECYLQKRRQLA. WD repeat units lie at residues 369 to 408, 418 to 458, 461 to 501, 503 to 543, 547 to 585, 588 to 627, and 642 to 675; these read HSAN…NEPA, STRS…SLME, EHEK…SVIN, DMKA…QPLH, GHKK…PVRT, GHTN…PVTS, and AGSY…VLAA. Residues 593–595 form a binding of human TRIB1 COP1-binding-motif region; the sequence is KNF.

In terms of assembly, homodimer. Interacts with HY5, HYH, BBX24/STO, BBX25/STH, CIP8, COP10, SPA1, SPA2, SPA3, SPA4 and UVR8 and phosphorylated PHYA. Light induces dissociation of the SPA1/COP1 complex. Interacts with HRT/RPP8 and triggers it to the 26s proteasome. Binds to CRY2; this competitive interaction prevents triggering to proteasome of other binding proteins. Binds to SHW1 in the nucleus. Bonds to CIP7. Interacts with CSU2. Binds to CIP1. Interacts directly with DHU1. Associates to UNE10/PIF8. Binds directly to PCH1 and PCHL. In terms of processing, autoubiquitinated.

Its subcellular location is the nucleus. It localises to the cytoplasm. It carries out the reaction S-ubiquitinyl-[E2 ubiquitin-conjugating enzyme]-L-cysteine + [acceptor protein]-L-lysine = [E2 ubiquitin-conjugating enzyme]-L-cysteine + N(6)-ubiquitinyl-[acceptor protein]-L-lysine.. Its pathway is protein modification; protein ubiquitination. E3 ubiquitin-protein ligase that acts as a repressor of photomorphogenesis and as an activator of etiolation in darkness. E3 ubiquitin ligases accept ubiquitin from an E2 ubiquitin-conjugating enzyme in the form of a thioester and then directly transfers the ubiquitin to targeted substrates. Represses photomorphogenesis in darkness by mediating ubiquitination and subsequent proteasomal degradation of light-induced transcription factors such as HY5, HYH and LAF1. Down-regulates MYB21, probably via ubiquitination process. Light stimuli abrogate the repression of photomorphogenesis, possibly due to its localization to the cytoplasm. Could play a role in switching between skotomorphogenetic and photomorphogenetic pathways. Mediates the ubiquitination-dependent degradation of HY5 in the darkness during seedling development (e.g. hypocotyl growth). Represses CIP7 in darkness. Triggers ubiquitination and subsequent protein degradation of UNE10/PIF8, PCH1 and PCHL in the dark. This chain is E3 ubiquitin-protein ligase COP1, found in Arabidopsis thaliana (Mouse-ear cress).